We begin with the raw amino-acid sequence, 345 residues long: Phosphate acyltransferase (345 aa).

Belongs to the PlsX family. In terms of assembly, homodimer. Probably interacts with PlsY.

It localises to the cytoplasm. The catalysed reaction is a fatty acyl-[ACP] + phosphate = an acyl phosphate + holo-[ACP]. It participates in lipid metabolism; phospholipid metabolism. In terms of biological role, catalyzes the reversible formation of acyl-phosphate (acyl-PO(4)) from acyl-[acyl-carrier-protein] (acyl-ACP). This enzyme utilizes acyl-ACP as fatty acyl donor, but not acyl-CoA. This chain is Phosphate acyltransferase, found in Wolbachia pipientis wMel.